We begin with the raw amino-acid sequence, 461 residues long: Glycine--tRNA ligase (461 aa).

Residues Arg-100 and Glu-174 each contribute to the substrate site. Residues 206-208 (RNE), 216-221 (FRTREF), 290-291 (EL), and 334-337 (GVDR) each bind ATP. A substrate-binding site is contributed by 221–225 (FEQME). 330 to 334 (EPSVG) contacts substrate.

This sequence belongs to the class-II aminoacyl-tRNA synthetase family. Homodimer.

Its subcellular location is the cytoplasm. The enzyme catalyses tRNA(Gly) + glycine + ATP = glycyl-tRNA(Gly) + AMP + diphosphate. Functionally, catalyzes the attachment of glycine to tRNA(Gly). This is Glycine--tRNA ligase from Caldanaerobacter subterraneus subsp. tengcongensis (strain DSM 15242 / JCM 11007 / NBRC 100824 / MB4) (Thermoanaerobacter tengcongensis).